The chain runs to 291 residues: tRNA (guanine-N(1)-)-methyltransferase (291 aa).

S-adenosyl-L-methionine-binding positions include Gly160 and 184-189 (IGDYVL).

It belongs to the RNA methyltransferase TrmD family. Homodimer.

It is found in the cytoplasm. The enzyme catalyses guanosine(37) in tRNA + S-adenosyl-L-methionine = N(1)-methylguanosine(37) in tRNA + S-adenosyl-L-homocysteine + H(+). In terms of biological role, specifically methylates guanosine-37 in various tRNAs. The protein is tRNA (guanine-N(1)-)-methyltransferase of Corynebacterium efficiens (strain DSM 44549 / YS-314 / AJ 12310 / JCM 11189 / NBRC 100395).